Consider the following 1184-residue polypeptide: DNA polymerase III subunit alpha (1184 aa).

This sequence belongs to the DNA polymerase type-C family. DnaE subfamily. As to quaternary structure, the Pol III holoenzyme complex contains at least 10 different subunits organized into 3 functionally essential subassemblies: the Pol III core, the beta sliding clamp processivity factor and the clamp-loading complex. The Pol III core (subunits alpha, epsilon and theta) contains the polymerase and the 3'-5' exonuclease proofreading activities. The polymerase is tethered to the template via the dimeric beta sliding clamp processivity factor. The clamp loader (also called gamma complex) assembles the beta sliding clamp onto the primed template and plays a central role in the organization and communication at the replication fork. The clamp-loading complex contains delta, delta', psi and chi, and 3 copies of either or both of two different DnaX proteins, gamma and tau. The DNA replisome complex has a single clamp loader (3 tau and 1 each of delta, delta', psi and chi subunits) which binds 3 Pol III cores (1 core on the leading strand and 2 on the lagging strand) each with a beta sliding clamp dimer. Interacts with the beta-sliding clamp (DnaN). Co-immunoprecipitates with DarG in the presence and absence of darT.

The protein localises to the cytoplasm. It catalyses the reaction DNA(n) + a 2'-deoxyribonucleoside 5'-triphosphate = DNA(n+1) + diphosphate. DNA polymerase III is a complex, multichain enzyme responsible for most of the replicative synthesis in bacteria. Pol III also exhibits 3' to 5' exonuclease activity. The alpha chain is the DNA polymerase. In Mycobacterium tuberculosis (strain ATCC 25618 / H37Rv), this protein is DNA polymerase III subunit alpha (dnaE1).